The chain runs to 902 residues: Respiratory burst oxidase homolog protein A (902 aa).

The Cytoplasmic portion of the chain corresponds to 1–344 (MMNRSEMQKL…KYFLFDNWKR (344 aa)). 2 disordered regions span residues 63-87 (KSPN…RSGR) and 107-130 (ASSV…RRSK). A compositionally biased stretch (polar residues) spans 74-87 (YEDQSLLRQGRSGR). The span at 107-116 (ASSVSSSSAR) shows a compositional bias: low complexity. 2 EF-hand-like regions span residues 163-173 (TMTTNGLLHRS) and 198-209 (ENVSGDSININE). EF-hand domains are found at residues 221-256 (DFDS…SASA) and 265-300 (QADE…APMQ). Positions 234, 236, 238, 240, and 245 each coordinate Ca(2+). Phosphoserine is present on residues Ser311 and Ser315. A helical membrane pass occupies residues 345-365 (VWVMALWIGAMAGLFTWKFME). Over 366 to 380 (YRKRSAYEVMGVCVC) the chain is Extracellular. The chain crosses the membrane as a helical span at residues 381-401 (IAKGAAETLKLNMAMILLPVC). One can recognise a Ferric oxidoreductase domain in the interval 383-540 (KGAAETLKLN…LFVIVYSLLV (158 aa)). The Cytoplasmic portion of the chain corresponds to 402–428 (RNTITWLRTKTKLSAIVPFDDSLNFHK). Residues 429 to 449 (VIAIGISVGVGIHATSHLACD) traverse the membrane as a helical segment. At 450–484 (FPRLIAADEDQYEPMEKYFGPQTKRYLDFVQSVEG) the chain is on the extracellular side. A helical transmembrane segment spans residues 485–505 (VTGIGMVVLMTIAFTLATTWF). Over 506-529 (RRNKLNLPGPLKKITGFNAFWYSH) the chain is Cytoplasmic. A helical membrane pass occupies residues 530–550 (HLFVIVYSLLVVHGFYVYLII). The Extracellular segment spans residues 551 to 709 (EPWYKKTTWM…PAQDYKKFEV (159 aa)). Residues 575-703 (IRAFRSSVEA…DGPYGAPAQD (129 aa)) form the FAD-binding FR-type domain. A helical transmembrane segment spans residues 710–730 (VLLVGLGIGATPMISIVSDII). Residues 731–902 (NNLKGVEEGS…TKFIFHKENF (172 aa)) are Cytoplasmic-facing. Residues 738–760 (EGSNRRQSPIHNMVTPPVSPSRK) are disordered.

Belongs to the RBOH (TC 5.B.1.3) family. Monomer and homodimer.

The protein resides in the membrane. Calcium-dependent NADPH oxidase that generates superoxide. This Arabidopsis thaliana (Mouse-ear cress) protein is Respiratory burst oxidase homolog protein A (RBOHA).